Here is a 377-residue protein sequence, read N- to C-terminus: Bifunctional enzyme IspD/IspF (377 aa).

Residues 1 to 221 are 2-C-methyl-D-erythritol 4-phosphate cytidylyltransferase; sequence MTTAAIIVAA…ERILRQDMDV (221 aa). Positions 222–377 are 2-C-methyl-D-erythritol 2,4-cyclodiphosphate synthase; it reads RLGNGYDVHR…ALATACLVKP (156 aa). A divalent metal cation is bound by residues aspartate 228 and histidine 230. 4-CDP-2-C-methyl-D-erythritol 2-phosphate contacts are provided by residues 228-230 and 254-255; these read DVH and HS. Histidine 262 is an a divalent metal cation binding site. Residues 276-278, 352-355, phenylalanine 359, and arginine 362 each bind 4-CDP-2-C-methyl-D-erythritol 2-phosphate; these read DIG and TTSE.

In the N-terminal section; belongs to the IspD/TarI cytidylyltransferase family. IspD subfamily. This sequence in the C-terminal section; belongs to the IspF family. Requires a divalent metal cation as cofactor.

It catalyses the reaction 2-C-methyl-D-erythritol 4-phosphate + CTP + H(+) = 4-CDP-2-C-methyl-D-erythritol + diphosphate. The enzyme catalyses 4-CDP-2-C-methyl-D-erythritol 2-phosphate = 2-C-methyl-D-erythritol 2,4-cyclic diphosphate + CMP. It functions in the pathway isoprenoid biosynthesis; isopentenyl diphosphate biosynthesis via DXP pathway; isopentenyl diphosphate from 1-deoxy-D-xylulose 5-phosphate: step 2/6. Its pathway is isoprenoid biosynthesis; isopentenyl diphosphate biosynthesis via DXP pathway; isopentenyl diphosphate from 1-deoxy-D-xylulose 5-phosphate: step 4/6. Bifunctional enzyme that catalyzes the formation of 4-diphosphocytidyl-2-C-methyl-D-erythritol from CTP and 2-C-methyl-D-erythritol 4-phosphate (MEP) (IspD), and catalyzes the conversion of 4-diphosphocytidyl-2-C-methyl-D-erythritol 2-phosphate (CDP-ME2P) to 2-C-methyl-D-erythritol 2,4-cyclodiphosphate (ME-CPP) with a corresponding release of cytidine 5-monophosphate (CMP) (IspF). This Ruegeria pomeroyi (strain ATCC 700808 / DSM 15171 / DSS-3) (Silicibacter pomeroyi) protein is Bifunctional enzyme IspD/IspF.